Reading from the N-terminus, the 1835-residue chain is MTVSSDTTAEISLGWSIQDWIDFHKSSSSQASLRLLESLLDSQNVAPVDNAWISLISKENLLHQFQILKSRENKETLPLYGVPIAVKDNIDVRGLPTTAACPSFAYEPSKDSKVVELLRNAGAIIVGKTNLDQFATGLVGTRSPYGKTPCAFSKEHVSGGSSAGSASVVARGIVPIALGTDTAGSGRVPAALNNLIGLKPTKGVFSCQGVVPACKSLDCVSIFALNLSDAERCFRIMCQPDPDNDEYSRPYVSNPLKKFSSNVTIAIPKNIPWYGETKNPVLFSNAVENLSRTGANVIEIDFEPLLELARCLYEGTWVAERYQAIQSFLDSKPPKESLDPTVISIIEGAKKYSAVDCFSFEYKRQGILQKVRRLLESVDVLCVPTCPLNPTMQQVADEPVLVNSRQGTWTNFVNLADLAALAVPAGFRDDGLPNGITLIGKKFTDYALLELANRYFQNIFPNGSRTYGTFTSSSVKPANDQLVGPDYDPSTSIKLAVVGAHLKGLPLHWQLEKVNATYLCTTKTSKAYQLFALPKNGPVLKPGLRRVQDSNGSQIELEVYSVPKELFGAFISMVPEPLGIGSVELESGEWIKSFICEESGYKAKGTVDITKYGGFRAYFEMLKKKESQKKKLFDTVLIANRGEIAVRIIKTLKKLGIRSVAVYSDPDKYSQHVTDADVSVPLHGTTAAQTYLDMNKIIDAAKQTNAQAIIPGYGFLSENADFSDACTSAGITFVGPSGDIIRGLGLKHSARQIAQKAGVPLVPGSLLITSVEEAKKVAAELEYPVMVKSTAGGGGIGLQKVDSEEDIEHIFETVKHQGETFFGDAGVFLERFIENARHVEVQLMGDGFGKAIALGERDCSLQRRNQKVIEETPAPNLPEKTRLALRKAAESLGSLLNYKCAGTVEFIYDEKKDEFYFLEVNTRLQVEHPITEMVTGLDLVEWMIRIAANDAPDFDSTKVEVNGVSMEARLYAENPLKNFRPSPGLLVDVKFPDWARVDTWVKKGTNISPEYDPTLAKIIVHGKDRDDAISKLNQALEETKVYGCITNIDYLKSIITSDFFAKAKVSTNILNSYQYEPTAIEITLPGAHTSIQDYPGRVGYWRIGVPPSGPMDAYSFRLANRIVGNDYRTPAIEVTLTGPSIVFHCETVIAITGGTALCTLDGQEIPQHKPVEVKRGSTLSIGKLTSGCRAYLGIRGGIDVPKYLGSYSTFTLGNVGGYNGRVLKLGDVLFLPSNEENKSVECLPQNIPQSLIPQISETKEWRIGVTCGPHGSPDFFKPESIEEFFSEKWKVHYNSNRFGVRLIGPKPKWARSNGGEGGMHPSNTHDYVYSLGAINFTGDEPVIITCDGPSLGGFVCQAVVPEAELWKVGQVKPGDSIQFVPLSYESSRSLKESQDVAIKSLDGTKLRRLDSVSILPSFETPILAQMEKVNELSPKVVYRQAGDRYVLVEYGDNEMNFNISYRIECLISLVKKNKTIGIVEMSQGVRSVLIEFDGYKVTQKELLKVLVAYETEIQFDENWKITSNIIRLPMAFEDSKTLACVQRYQETIRSSAPWLPNNVDFIANVNGISRNEVYDMLYSARFMVLGLGDVFLGSPCAVPLDPRHRFLGSKYNPSRTYTERGAVGIGGMYMCIYAANSPGGYQLVGRTIPIWDKLCLAASSEVPWLMNPFDQVEFYPVSEEDLDKMTEDCDNGVYKVNIEKSVFDHQEYLRWINANKDSITAFQEGQLGERAEEFAKLIQNANSELKESVTVKPDEEEDFPEGAEIVYSEYSGRFWKSIASVGDVIEAGQGLLIIEAMKAEMIISAPKSGKIIKICHGNGDMVDSGDIVAVIETLA.

ATP contacts are provided by residues 122 to 129 and Lys-747; that span reads GAIIVGKT. The 444-residue stretch at 632 to 1075 folds into the Biotin carboxylation domain; sequence LFDTVLIANR…STNILNSYQY (444 aa). The 198-residue stretch at 751–948 folds into the ATP-grasp domain; it reads RQIAQKAGVP…LVEWMIRIAA (198 aa). Phosphoserine is present on Ser-803. Residues Glu-830 and Asn-865 each coordinate ATP. The 79-residue stretch at 1754-1832 folds into the Biotinyl-binding domain; it reads DEEEDFPEGA…DSGDIVAVIE (79 aa). Position 1798 is an N6-biotinyllysine (Lys-1798).

In terms of assembly, monomer. The cofactor is biotin.

The enzyme catalyses urea + hydrogencarbonate + ATP = urea-1-carboxylate + ADP + phosphate + H(+). The catalysed reaction is urea-1-carboxylate + H2O + 3 H(+) = 2 NH4(+) + 2 CO2. It functions in the pathway nitrogen metabolism; urea degradation; CO(2) and NH(3) from urea (allophanate route): step 1/2. The protein operates within nitrogen metabolism; urea degradation; CO(2) and NH(3) from urea (allophanate route): step 2/2. Functionally, hydrolysis of urea to ammonia and CO(2). The protein is Urea amidolyase (DUR1,2) of Saccharomyces cerevisiae (strain ATCC 204508 / S288c) (Baker's yeast).